Reading from the N-terminus, the 161-residue chain is Large ribosomal subunit protein uL15 (161 aa).

The segment covering 1–10 (MKLNELRDNP) has biased composition (basic and acidic residues). The segment at 1–42 (MKLNELRDNPGARPKSKRLGRGIGSGKGKTSGKGVKGQKARE) is disordered. The segment covering 21–35 (RGIGSGKGKTSGKGV) has biased composition (gly residues).

This sequence belongs to the universal ribosomal protein uL15 family. As to quaternary structure, part of the 50S ribosomal subunit.

In terms of biological role, binds to the 23S rRNA. This Acidiphilium cryptum (strain JF-5) protein is Large ribosomal subunit protein uL15.